Here is a 160-residue protein sequence, read N- to C-terminus: Ribosomal RNA large subunit methyltransferase H (160 aa).

L76 and G108 together coordinate S-adenosyl-L-methionine.

The protein belongs to the RNA methyltransferase RlmH family. As to quaternary structure, homodimer.

Its subcellular location is the cytoplasm. It catalyses the reaction pseudouridine(1915) in 23S rRNA + S-adenosyl-L-methionine = N(3)-methylpseudouridine(1915) in 23S rRNA + S-adenosyl-L-homocysteine + H(+). Its function is as follows. Specifically methylates the pseudouridine at position 1915 (m3Psi1915) in 23S rRNA. The sequence is that of Ribosomal RNA large subunit methyltransferase H from Bradyrhizobium sp. (strain BTAi1 / ATCC BAA-1182).